Consider the following 1062-residue polypeptide: Cell division control protein 7 (1062 aa).

The Protein kinase domain occupies 9–259 (ITLGDCLGKG…TRKLLKHPWV (251 aa)). Residues 15 to 23 (LGKGAFGAV) and Lys38 contribute to the ATP site. The active-site Proton acceptor is the Asp131. Composition is skewed to polar residues over residues 296–310 (NRINPTLHSGRQSSY) and 376–394 (AFNSDQISESNNFNASPLS). Disordered regions lie at residues 296–331 (NRINPTLHSGRQSSYHMPESPKTPIAESPDHDNWDN), 361–394 (NNSSSITSSPSKSRHAFNSDQISESNNFNASPLS), and 1038–1062 (NEHKSPISKPHMPPPRWQPKQPLTQ).

This sequence belongs to the protein kinase superfamily. Ser/Thr protein kinase family. CDC7 subfamily. As to quaternary structure, interacts with spg1. Seems to interact with cdc11. Requires Mg(2+) as cofactor.

The enzyme catalyses L-seryl-[protein] + ATP = O-phospho-L-seryl-[protein] + ADP + H(+). The catalysed reaction is L-threonyl-[protein] + ATP = O-phospho-L-threonyl-[protein] + ADP + H(+). In terms of biological role, protein kinase essential for cell division. Plays a key role in initiation of septum formation and cytokinesis. The sequence is that of Cell division control protein 7 (cdc7) from Schizosaccharomyces pombe (strain 972 / ATCC 24843) (Fission yeast).